Reading from the N-terminus, the 124-residue chain is Small ribosomal subunit protein uS12c (124 aa).

Disordered regions lie at residues 1–28 and 104–124; these read MPTI…QSCP and AAGV…KPKS. Composition is skewed to basic residues over residues 11–20 and 109–124; these read ERRKIHKKTK and DRRK…KPKS.

It belongs to the universal ribosomal protein uS12 family. In terms of assembly, part of the 30S ribosomal subunit.

Its subcellular location is the plastid. It is found in the chloroplast. Its function is as follows. With S4 and S5 plays an important role in translational accuracy. Located at the interface of the 30S and 50S subunits. The protein is Small ribosomal subunit protein uS12c (rps12) of Pyropia yezoensis (Susabi-nori).